The following is an 883-amino-acid chain: Alanine--tRNA ligase (883 aa).

4 residues coordinate Zn(2+): histidine 565, histidine 569, cysteine 675, and histidine 679.

This sequence belongs to the class-II aminoacyl-tRNA synthetase family. Zn(2+) serves as cofactor.

It localises to the cytoplasm. The catalysed reaction is tRNA(Ala) + L-alanine + ATP = L-alanyl-tRNA(Ala) + AMP + diphosphate. Catalyzes the attachment of alanine to tRNA(Ala) in a two-step reaction: alanine is first activated by ATP to form Ala-AMP and then transferred to the acceptor end of tRNA(Ala). Also edits incorrectly charged Ser-tRNA(Ala) and Gly-tRNA(Ala) via its editing domain. This Rhodospirillum rubrum (strain ATCC 11170 / ATH 1.1.1 / DSM 467 / LMG 4362 / NCIMB 8255 / S1) protein is Alanine--tRNA ligase.